Reading from the N-terminus, the 347-residue chain is Protein RecA (347 aa).

G64–T71 contacts ATP.

It belongs to the RecA family.

The protein resides in the cytoplasm. In terms of biological role, can catalyze the hydrolysis of ATP in the presence of single-stranded DNA, the ATP-dependent uptake of single-stranded DNA by duplex DNA, and the ATP-dependent hybridization of homologous single-stranded DNAs. It interacts with LexA causing its activation and leading to its autocatalytic cleavage. The protein is Protein RecA of Bartonella tribocorum (strain CIP 105476 / IBS 506).